The following is a 458-amino-acid chain: Argininosuccinate lyase (458 aa).

It belongs to the lyase 1 family. Argininosuccinate lyase subfamily.

It localises to the cytoplasm. The catalysed reaction is 2-(N(omega)-L-arginino)succinate = fumarate + L-arginine. Its pathway is amino-acid biosynthesis; L-arginine biosynthesis; L-arginine from L-ornithine and carbamoyl phosphate: step 3/3. This Heliobacterium mobile (Heliobacillus mobilis) protein is Argininosuccinate lyase.